The chain runs to 231 residues: MAQRSQQASPPPNLAADKAAALRLTPVSRETESRLDAYVALLLQWQAKTNLISPATLPQLWTRHIADSLQLLTVAPDARTWLDFGSGGGFPGVVLACAMAELGGSVTLVERNAKKAAFLREALRVSGGVGQVILADIGDSVDRFPPHIDCITARAVAPLHQLIGFAEPLLHRGGKALFLKGQDVEAELTEAAKYWRLQPRLHASLTGGQGWIVELDRIERQSATTINGTRA.

S-adenosyl-L-methionine contacts are provided by glycine 85, phenylalanine 90, and arginine 154.

Belongs to the methyltransferase superfamily. RNA methyltransferase RsmG family.

It localises to the cytoplasm. It catalyses the reaction guanosine(527) in 16S rRNA + S-adenosyl-L-methionine = N(7)-methylguanosine(527) in 16S rRNA + S-adenosyl-L-homocysteine. Its function is as follows. Specifically methylates the N7 position of guanine in position 527 of 16S rRNA. This chain is Ribosomal RNA small subunit methyltransferase G, found in Rhodopseudomonas palustris (strain BisA53).